The primary structure comprises 430 residues: MKTQMNYAKEGVFTKEMQIVAQKENLSKDFLLENIACGKIIIPANINHKSLDPNGIGFGLRTKVNVNLGVSNDCVDYSEEMKKVELAHKFGIEAIMDLSNYGKTSRFRDELVNVSKAMIGTVPVYDAVGFLEKDLKQIGAKDFLDVVYHHAKSGVDFMTIHAGINSRATHIFKQSKRLTNIVSRGGSVLYAWMMMKDAENPFFEYYDDLLDICLKYDVTLSLGDALRPGSTHDASDGAQISELIELSLLTQRAWDVGVQVMIEGPGHMAINEIEANMQLEKRLCKGAPFYVLGPLVTDIGAGYDHISGAIGGAVAAASGADMLCYVTPAEHLRLPNLEDVREGIVATKIAAHAGDIAKLPKERARDDEMSKARQEIDWEKMFKLAIDGEKAKKMFNERRPDDLNSCSMCGKMCAMNTMNQILKGEDVSLV.

Substrate-binding positions include asparagine 67, methionine 96, tyrosine 125, histidine 161, 183-185 (SRG), 224-227 (DALR), and glutamate 263. Histidine 267 contributes to the Zn(2+) binding site. Tyrosine 290 serves as a coordination point for substrate. Histidine 331 contacts Zn(2+). The [4Fe-4S] cluster site is built by cysteine 406, cysteine 409, and cysteine 413.

It belongs to the ThiC family. Homodimer. [4Fe-4S] cluster serves as cofactor.

It carries out the reaction 5-amino-1-(5-phospho-beta-D-ribosyl)imidazole + S-adenosyl-L-methionine = 4-amino-2-methyl-5-(phosphooxymethyl)pyrimidine + CO + 5'-deoxyadenosine + formate + L-methionine + 3 H(+). It participates in cofactor biosynthesis; thiamine diphosphate biosynthesis. Functionally, catalyzes the synthesis of the hydroxymethylpyrimidine phosphate (HMP-P) moiety of thiamine from aminoimidazole ribotide (AIR) in a radical S-adenosyl-L-methionine (SAM)-dependent reaction. In Campylobacter jejuni subsp. doylei (strain ATCC BAA-1458 / RM4099 / 269.97), this protein is Phosphomethylpyrimidine synthase.